Reading from the N-terminus, the 414-residue chain is Tetraspanning orphan receptor (414 aa).

Residues 1 to 28 (MPRASALLTSDPRHQFTCCLCLHVRTGT) are Cytoplasmic-facing. Residues 29-49 (IIFGITQIIIQLIFISFLFLM) traverse the membrane as a helical segment. Residues 50-166 (TFNPRLFPED…EIKIRQFSPY (117 aa)) are Extracellular-facing. A helical membrane pass occupies residues 167-187 (IAVCVTTFSLAFCCFMVHGAI). The Cytoplasmic segment spans residues 188-194 (TRQPTHL). A helical membrane pass occupies residues 195–215 (LPFFFIQVFDLIICLIHILGF). Topologically, residues 216–241 (MSSTSDIRLMIHTKTGPIYIKSTGLA) are extracellular. A helical transmembrane segment spans residues 242–262 (FIILSISCMMLAFKAYCLGMV). At 263-414 (WDCYKYLMLN…TSTPSNVHPC (152 aa)) the chain is on the cytoplasmic side. The tract at residues 306-328 (LTGNLDSANESNTRAHPDPVTYD) is disordered.

As to quaternary structure, interacts (via N-terminal extracellular domain) with human C2a. In terms of processing, phosphorylated on tyrosine residues.

The protein localises to the cell membrane. In terms of biological role, cell surface receptor that binds to human complement C2a protein. This results in inhibition of the classical and lectin pathways of complement activation, probably due to interference with binding of C2a to C4b and interference with cleavage by C1 or MASP2 such that C3 convertase cannot be formed. This infers resistance to complement-mediated cell lysis, allowing parasite survival and infection. This is Tetraspanning orphan receptor from Schistosoma japonicum (Blood fluke).